A 430-amino-acid polypeptide reads, in one-letter code: MKTTIKQAKDHLNQDVTIGAWLTNKRSSGKIAFLQLRDGTGFMQGVVVKSEVDEEVFKLAKEIAQESSLYVTGTITEDNRSDLGYEMQVKSIEVISEAHDYPITPKNHGTEFLMDHRHLWLRSKKQHAVMKIRNEVIRATYEFFNKDGFTKVDPPILTASAPEGTSELFHTKYFDQDAFLSQSGQLYLEAAAMAHGKVFSFGPTFRAEKSKTRRHLIEFWMIEGEMAFTNHAESLEIQEQYVTHVVKSVLENCKLELKILERDTSKLEKVATPFPRISYDDAIEFLKAEGFDDIEWGEDFGAPHETAIANHYDLPVFITNYPTKIKPFYMQPNPENEETVLCADLIAPEGYGEIIGGSERVDDLELLEQRVKEHGLDEEAYSYYLDLRRYGSVPHCGFGLGLERTVAWISGVEHVRETAPFPRLLNRLYP.

It belongs to the class-II aminoacyl-tRNA synthetase family. Homodimer.

It localises to the cytoplasm. It carries out the reaction tRNA(Asn) + L-asparagine + ATP = L-asparaginyl-tRNA(Asn) + AMP + diphosphate + H(+). The polypeptide is Asparagine--tRNA ligase (Staphylococcus aureus (strain JH1)).